The following is a 237-amino-acid chain: Ubiquinone biosynthesis O-methyltransferase (237 aa).

The S-adenosyl-L-methionine site is built by Arg-38, Gly-58, Asp-79, and Met-124.

The protein belongs to the methyltransferase superfamily. UbiG/COQ3 family.

The catalysed reaction is a 3-demethylubiquinol + S-adenosyl-L-methionine = a ubiquinol + S-adenosyl-L-homocysteine + H(+). It catalyses the reaction a 3-(all-trans-polyprenyl)benzene-1,2-diol + S-adenosyl-L-methionine = a 2-methoxy-6-(all-trans-polyprenyl)phenol + S-adenosyl-L-homocysteine + H(+). It participates in cofactor biosynthesis; ubiquinone biosynthesis. O-methyltransferase that catalyzes the 2 O-methylation steps in the ubiquinone biosynthetic pathway. The chain is Ubiquinone biosynthesis O-methyltransferase from Acinetobacter baumannii (strain ACICU).